The sequence spans 613 residues: Dihydroxy-acid dehydratase (613 aa).

Asp-81 provides a ligand contact to Mg(2+). Residue Cys-122 coordinates [2Fe-2S] cluster. Mg(2+) is bound by residues Asp-123 and Lys-124. An N6-carboxylysine modification is found at Lys-124. Residue Cys-193 coordinates [2Fe-2S] cluster. Residue Glu-489 participates in Mg(2+) binding. Ser-515 acts as the Proton acceptor in catalysis.

This sequence belongs to the IlvD/Edd family. Homodimer. Requires [2Fe-2S] cluster as cofactor. The cofactor is Mg(2+).

The enzyme catalyses (2R)-2,3-dihydroxy-3-methylbutanoate = 3-methyl-2-oxobutanoate + H2O. It carries out the reaction (2R,3R)-2,3-dihydroxy-3-methylpentanoate = (S)-3-methyl-2-oxopentanoate + H2O. It functions in the pathway amino-acid biosynthesis; L-isoleucine biosynthesis; L-isoleucine from 2-oxobutanoate: step 3/4. It participates in amino-acid biosynthesis; L-valine biosynthesis; L-valine from pyruvate: step 3/4. Its function is as follows. Functions in the biosynthesis of branched-chain amino acids. Catalyzes the dehydration of (2R,3R)-2,3-dihydroxy-3-methylpentanoate (2,3-dihydroxy-3-methylvalerate) into 2-oxo-3-methylpentanoate (2-oxo-3-methylvalerate) and of (2R)-2,3-dihydroxy-3-methylbutanoate (2,3-dihydroxyisovalerate) into 2-oxo-3-methylbutanoate (2-oxoisovalerate), the penultimate precursor to L-isoleucine and L-valine, respectively. This chain is Dihydroxy-acid dehydratase, found in Pseudomonas putida (strain ATCC 700007 / DSM 6899 / JCM 31910 / BCRC 17059 / LMG 24140 / F1).